Reading from the N-terminus, the 250-residue chain is mRNA-decapping protein g5R (250 aa).

Positions 97-243 (QKFRKNWLLP…IIGPAFNFIK (147 aa)) constitute a Nudix hydrolase domain. The Nudix box signature appears at 132-153 (GKPKEDESDLTCAIREFEEETG). Glu-138 serves as a coordination point for Mg(2+). The active-site Nucleophile is Glu-147. Residues Glu-151 and Asp-173 each coordinate Mg(2+).

The protein belongs to the Nudix hydrolase family. DIPP subfamily. Interacts with host RPL23A. Requires Mg(2+) as cofactor. The cofactor is Mn(2+).

It is found in the host rough endoplasmic reticulum. It catalyses the reaction diphospho-myo-inositol polyphosphate + H2O = myo-inositol polyphosphate + phosphate.. Its function is as follows. Decapping enzyme required for the removal of the 5'-end m7GpppN cap tethered to viral and host mRNAs to allow their decay in cells. May therefore accelerate viral and cellular mRNA turnover to eliminate competing host mRNAs and allow stage-specific synthesis of viral proteins. Acceleration of the turnover of cellular transcripts may even promote the shutoff of host protein synthesis. In addition to the mRNA cap, g5R also efficiently hydrolyzes diphosphoinositol polyphosphates. Down-regulation of the level of PP-InsP5 (diphosphoinositol pentakisphosphate) may play a role in viral manipulation of the cellular secretory pathway, a step necessary for the formation of virions. Binds viral and cellular poly(A) mRNAs, thereby decreasing both types of mRNAs. The protein is mRNA-decapping protein g5R of African swine fever virus (isolate Tick/South Africa/Pretoriuskop Pr4/1996) (ASFV).